A 525-amino-acid chain; its full sequence is GMP synthase [glutamine-hydrolyzing] (525 aa).

The 199-residue stretch at 9 to 207 (RILILDFGSQ…VRDICQCEAL (199 aa)) folds into the Glutamine amidotransferase type-1 domain. The active-site Nucleophile is the Cys86. Active-site residues include His181 and Glu183. The GMPS ATP-PPase domain maps to 208–400 (WTPAKIIDDA…LGLPYDMLYR (193 aa)). Residue 235–241 (SGGVDSS) coordinates ATP.

Homodimer.

It catalyses the reaction XMP + L-glutamine + ATP + H2O = GMP + L-glutamate + AMP + diphosphate + 2 H(+). Its pathway is purine metabolism; GMP biosynthesis; GMP from XMP (L-Gln route): step 1/1. Functionally, catalyzes the synthesis of GMP from XMP. This is GMP synthase [glutamine-hydrolyzing] from Escherichia coli O127:H6 (strain E2348/69 / EPEC).